Here is a 685-residue protein sequence, read N- to C-terminus: Stromal interaction molecule 1 (685 aa).

A signal peptide spans 1 to 22 (MDVCARLALWLLWGLLLHQGQS). The Extracellular portion of the chain corresponds to 23–213 (LSHSHSEKNT…LLTRHNHLKD (191 aa)). Positions 24 to 43 (SHSHSEKNTGASSGATSEES) are disordered. Positions 32–41 (TGASSGATSE) are enriched in low complexity. EF-hand domains follow at residues 64–97 (SFEAVRNIHKLMDDDANGDVDVEESDEFLREDLN) and 102–126 (TVKHSTFHGEDKLISVEDLWKAWKS). Asp76, Asp78, Asn80, Asp82, and Glu87 together coordinate Ca(2+). 2 N-linked (GlcNAc...) asparagine glycosylation sites follow: Asn131 and Asn171. An SAM domain is found at 132 to 200 (WTVDEVIQWL…QLKALDTVLF (69 aa)). The helical transmembrane segment at 214 to 234 (FMLVVSIVIGVGGCWFAYIQN) threads the bilayer. Topologically, residues 235-685 (RYSKEHMKKM…LKIFKKPLKK (451 aa)) are cytoplasmic. A coiled-coil region spans residues 248–442 (LEGLHRAEQS…IEILCGFQIV (195 aa)). The residue at position 257 (Ser257) is a Phosphoserine. The SOAR/CAD stretch occupies residues 344–442 (PEALQKWLQL…IEILCGFQIV (99 aa)). The contributes to fast Ca(2+)-dependent inactivation of CRAC channels stretch occupies residues 475 to 483 (DDVDDMDEE). Residues 490-499 (MQSPSLQSSV) are compositionally biased toward low complexity. Residues 490-541 (MQSPSLQSSVRQRLTEPQLGLGSQRDLTHSDSESSLHMSDRQRVAPKPPQMG) are disordered. Residue Thr504 is modified to Phosphothreonine. Phosphoserine is present on Ser512. Residues 515–532 (DLTHSDSESSLHMSDRQR) show a composition bias toward basic and acidic residues. Residue Thr517 is modified to Phosphothreonine. Residues Ser519, Ser521, Ser523, Ser524, Ser567, Ser575, Ser602, Ser608, Ser618, Ser621, and Ser628 each carry the phosphoserine modification. A disordered region spans residues 596–685 (LMELNPSVPP…LKIFKKPLKK (90 aa)). Over residues 608–620 (SPLLDSSHSLSPS) the composition is skewed to low complexity. Residues 642-645 (TRIP) carry the Microtubule tip localization signal motif. Acidic residues predominate over residues 655-666 (EEDNGSIGEETD). Ser660 is subject to Phosphoserine. Thr665 is modified (phosphothreonine). Ser668 carries the phosphoserine modification. Residues 670–685 (GRKKFPLKIFKKPLKK) are compositionally biased toward basic residues. Residues 672–685 (KKFPLKIFKKPLKK) are required for generation of inwardly rectifying CRAC currents.

As to quaternary structure, monomer in the presence of Ca(2+). It oligomerizes in absence of Ca(2+). Forms homooligomers and heterooligomers with STIM2. Interacts with pore-forming subunits of CRAC channels, ORAI1, ORAI2 and ORAI3; this interaction is potentiated upon Ca(2+) store depletion. Interacts (via the transmembrane region and the SOAR/CAD domain) with SPPL3; the interaction promotes the binding of STIM1 to ORAI1. Interacts with ORAI1. Interacts with MAPRE1; probably required for targeting to the growing microtubule plus ends. Interacts with CRACR2A/EFCAB4B; the interaction is direct and takes place in absence of Ca(2+). Forms a complex with CRACR2A/EFCAB4B and ORAI1 at low concentration of Ca(2+), the complex dissociates at elevated Ca(2+) concentrations. Interacts with SARAF, promoting a slow inactivation of STIM1-dependent SOCE activity, possibly by facilitating the deoligomerization of STIM1. Interacts with EFHB; the interaction takes place upon Ca(2+)-store depletion and inhibits the association with SARAF. Interacts with ASPH. Interacts with SLC35G1; intracellular Ca(2+)-dependent. May interact with ATP1A1, ATP2A2, ATP2B1, ATP2B4, KPNB1 and XPO1; through SLC35G1. Interacts with STIMATE, promoting STIM1 conformational switch. Interacts with TMEM178A. Interacts with CASQ1 (via C-terminal end and preferentially with the monomeric form); this interaction increases in response to a depletion of intracellular Ca(2+), decreases both STIM1 aggregation and clustering, interaction of STIM1 with ORAI1 and store-operated Ca(2+) entry (SOCE) activity. Interacts with ADCY8. Interacts with TMEM203. In terms of processing, glycosylation is required for cell surface expression. Post-translationally, phosphorylated predominantly on Ser residues. As to expression, expressed in maturation-stage ameloblasts (at protein level). Expressed in all tissues examined and in many cell types, including bone marrow stroma, fibroblast, B-cell precursors, lymphoma and erythroleukemia.

It is found in the cell membrane. The protein localises to the endoplasmic reticulum membrane. Its subcellular location is the sarcoplasmic reticulum. The protein resides in the cytoplasm. It localises to the cytoskeleton. Acts as a Ca(2+) sensor that gates two major inward rectifying Ca(2+) channels at the plasma membrane: Ca(2+) release-activated Ca(2+) (CRAC) channels and arachidonate-regulated Ca(2+)-selective (ARC) channels. Plays a role in mediating store-operated Ca(2+) entry (SOCE), a Ca(2+) influx following depletion of intracellular Ca(2+) stores. Upon Ca(2+) depletion, translocates from the endoplasmic reticulum to the plasma membrane where it activates CRAC channel pore-forming subunits ORA1, ORA2 and ORAI3 to generate sustained and oscillatory Ca(2+) entry. Involved in enamel formation. The sequence is that of Stromal interaction molecule 1 (Stim1) from Mus musculus (Mouse).